Consider the following 230-residue polypeptide: Cytochrome c oxidase subunit 2 (230 aa).

Residues 1 to 26 (MATPAQLGLMDAASPVMEEMIYFHDH) are Mitochondrial intermembrane-facing. A helical transmembrane segment spans residues 27–48 (VMLVLILITCLIFYSMLVLISS). Residues 49 to 62 (KYIYRFLTDGHVIE) lie on the Mitochondrial matrix side of the membrane. Residues 63–82 (TVWTVIPAIILVVVALPSLK) traverse the membrane as a helical segment. Over 83–230 (LLYLTDELDN…GWCDMMLDEE (148 aa)) the chain is Mitochondrial intermembrane. Cu cation-binding residues include H161, C196, E198, C200, H204, and M207. E198 provides a ligand contact to Mg(2+).

This sequence belongs to the cytochrome c oxidase subunit 2 family. Component of the cytochrome c oxidase (complex IV, CIV), a multisubunit enzyme composed of a catalytic core of 3 subunits and several supernumerary subunits. The complex exists as a monomer or a dimer and forms supercomplexes (SCs) in the inner mitochondrial membrane with ubiquinol-cytochrome c oxidoreductase (cytochrome b-c1 complex, complex III, CIII). Cu cation is required as a cofactor.

It localises to the mitochondrion inner membrane. It catalyses the reaction 4 Fe(II)-[cytochrome c] + O2 + 8 H(+)(in) = 4 Fe(III)-[cytochrome c] + 2 H2O + 4 H(+)(out). Component of the cytochrome c oxidase, the last enzyme in the mitochondrial electron transport chain which drives oxidative phosphorylation. The respiratory chain contains 3 multisubunit complexes succinate dehydrogenase (complex II, CII), ubiquinol-cytochrome c oxidoreductase (cytochrome b-c1 complex, complex III, CIII) and cytochrome c oxidase (complex IV, CIV), that cooperate to transfer electrons derived from NADH and succinate to molecular oxygen, creating an electrochemical gradient over the inner membrane that drives transmembrane transport and the ATP synthase. Cytochrome c oxidase is the component of the respiratory chain that catalyzes the reduction of oxygen to water. Electrons originating from reduced cytochrome c in the intermembrane space (IMS) are transferred via the dinuclear copper A center (CU(A)) of subunit 2 and heme A of subunit 1 to the active site in subunit 1, a binuclear center (BNC) formed by heme A3 and copper B (CU(B)). The BNC reduces molecular oxygen to 2 water molecules using 4 electrons from cytochrome c in the IMS and 4 protons from the mitochondrial matrix. The polypeptide is Cytochrome c oxidase subunit 2 (COII) (Branchiostoma floridae (Florida lancelet)).